The primary structure comprises 258 residues: Oxidoreductase fscI (258 aa).

NADP(+)-binding residues include leucine 34, arginine 59, aspartate 82, asparagine 109, and lysine 141. Catalysis depends on serine 163, which acts as the Proton donor. Position 193 (arginine 193) interacts with NADP(+).

It belongs to the short-chain dehydrogenases/reductases (SDR) family.

Its pathway is secondary metabolite biosynthesis. Its function is as follows. Oxidoreductase; part of the fragmented gene cluster that mediates the biosynthesis of fusarochromene, a tryptophan-derived metabolite closely related to a group of mycotoxins including fusarochromanone. Within the pathway, fscI catalyzes the formation of the chromene ring from the prenyl moity added by the prenyltransferase fscG. The first step of the pathway is the epimerization of L-tryptophan to D-tryptophan in the presence of the NRPS-like tryptophan epimerase fscC. D-tryptophan is subsequently hydroxylated by the tryptophan 6-hydroxylase fscE to yield 6-hydroxytryptophan. The pyrrole ring undergoes cleavaged by the tryptophan 2,3-dioxygenase fscD and is finally converted to 4-hydroxykyrunenine by the hydrolase fscH. The NRPS-like oxidoreductase fscA reduces the carboxyl group to primary alcohol and the DMATS-type prenyltransferase fscG performs prenylation, followed by the formation of a chromene ring catalyzed by the oxidoreductase fscI, which leads to desacetylfusarochromene. Epoxidation by fscF and rearrangement reactions of chromene double bonds convert compound desacetylfusarochromene to fusarochromanones. Although specific acetyltransferases were not found near the fsc gene cluster, several predicted enzymes containing the N-acetyltransferase superfamily domain are present in the genome of F.equiseti. These predicted enzymes may have the potential to convert desacetylfusarochromene to fusarochromene. This chain is Oxidoreductase fscI, found in Fusarium equiseti (Fusarium scirpi).